A 229-amino-acid chain; its full sequence is Transcriptional regulatory protein YxdJ (229 aa).

In terms of domain architecture, Response regulatory spans Lys-3–Ile-116. Asp-52 carries the post-translational modification 4-aspartylphosphate. The segment at residues Glu-129–Ala-227 is a DNA-binding region (ompR/PhoB-type).

In terms of processing, phosphorylated by YxdK.

It localises to the cytoplasm. Its function is as follows. Probable member of the two-component regulatory system YxdK/YxdJ. Positively regulates the expression of the yxdLMyxeA operon by direct interaction with its promoter region. Could also indirectly regulate the expression of the dlt operon. This Bacillus subtilis (strain 168) protein is Transcriptional regulatory protein YxdJ (yxdJ).